The primary structure comprises 440 residues: UDP-N-acetylmuramoylalanine--D-glutamate ligase (440 aa).

G115 to T121 is an ATP binding site.

Belongs to the MurCDEF family.

It localises to the cytoplasm. It carries out the reaction UDP-N-acetyl-alpha-D-muramoyl-L-alanine + D-glutamate + ATP = UDP-N-acetyl-alpha-D-muramoyl-L-alanyl-D-glutamate + ADP + phosphate + H(+). Its pathway is cell wall biogenesis; peptidoglycan biosynthesis. Its function is as follows. Cell wall formation. Catalyzes the addition of glutamate to the nucleotide precursor UDP-N-acetylmuramoyl-L-alanine (UMA). This is UDP-N-acetylmuramoylalanine--D-glutamate ligase from Aliivibrio fischeri (strain ATCC 700601 / ES114) (Vibrio fischeri).